A 2641-amino-acid chain; its full sequence is Inverse autotransporter adhesin YeeJ (2641 aa).

Positions 1-25 (MGIKLRRLTAGICLITQLVFPMAAA) are cleaved as a signal peptide. Residues 50 to 98 (VPYTLGALESAQSVAERFGISVAELRKLNQFRTFARGFDNVRQGDELDV) enclose the LysM domain. Residues 125 to 400 (TSQQIGSLLA…SRFDLVDRNN (276 aa)) form an inverse autotransporter region. Residues 513-605 (QKDSSVSLSS…GVDAAKAPAV (93 aa)) are invasin 3 domain. 17 consecutive Big-1 domains span residues 617 to 711 (HSSI…AGFI), 721 to 815 (IATL…VSFV), 822 to 913 (QVDL…VIFI), 920 to 1017 (ALTL…MTFV), 1024 to 1116 (VVVL…VNIA), 1123 to 1220 (QVTL…VTFV), 1227 to 1319 (VVVL…VNIA), 1326 to 1423 (QVTL…VTFV), 1430 to 1523 (LVVL…VHFI), 1531 to 1633 (IIEL…SINV), 1641 to 1734 (HLTL…VTYV), 1741 to 1837 (EISL…VNFI), 1844 to 1941 (QVNL…VTLI), 1948 to 2032 (KLAS…PTEV), 2048 to 2141 (ITSL…VIDQ), 2142 to 2235 (KLTL…IVKV), and 2244 to 2336 (VASF…ITLV). A C-type lectin domain region spans residues 2538–2641 (KSWWVNAGDA…FAYATCYKNL (104 aa)).

Belongs to the intimin/invasin family.

Its subcellular location is the cell outer membrane. Its function is as follows. A probable inverse autotransporter, it may be involved in biofilm formation and cell adhesion. May bind peptidoglycan via its LysM domain. The sequence is that of Inverse autotransporter adhesin YeeJ (yeeJ) from Escherichia coli O157:H7.